We begin with the raw amino-acid sequence, 184 residues long: Large ribosomal subunit protein uL6 (184 aa).

This sequence belongs to the universal ribosomal protein uL6 family. As to quaternary structure, part of the 50S ribosomal subunit.

Functionally, this protein binds to the 23S rRNA, and is important in its secondary structure. It is located near the subunit interface in the base of the L7/L12 stalk, and near the tRNA binding site of the peptidyltransferase center. This Thermococcus gammatolerans (strain DSM 15229 / JCM 11827 / EJ3) protein is Large ribosomal subunit protein uL6.